The primary structure comprises 89 residues: Putative regulatory protein RBAM_015500 (89 aa).

Belongs to the RemA family.

This chain is Putative regulatory protein RBAM_015500, found in Bacillus velezensis (strain DSM 23117 / BGSC 10A6 / LMG 26770 / FZB42) (Bacillus amyloliquefaciens subsp. plantarum).